The primary structure comprises 264 residues: 5'-nucleotidase SurE (264 aa).

Asp10, Asp11, Ser43, and Asn99 together coordinate a divalent metal cation.

Belongs to the SurE nucleotidase family. Requires a divalent metal cation as cofactor.

The protein localises to the cytoplasm. It catalyses the reaction a ribonucleoside 5'-phosphate + H2O = a ribonucleoside + phosphate. Nucleotidase that shows phosphatase activity on nucleoside 5'-monophosphates. This Methanococcus maripaludis (strain C5 / ATCC BAA-1333) protein is 5'-nucleotidase SurE.